Reading from the N-terminus, the 360-residue chain is Membrane-bound lytic murein transglycosylase C (360 aa).

An N-terminal signal peptide occupies residues 1-16 (MKKLLALAVIAPLLIS). The N-palmitoyl cysteine moiety is linked to residue C17. Residue C17 is the site of S-diacylglycerol cysteine attachment.

This sequence belongs to the transglycosylase Slt family.

The protein localises to the cell outer membrane. The catalysed reaction is Exolytic cleavage of the (1-&gt;4)-beta-glycosidic linkage between N-acetylmuramic acid (MurNAc) and N-acetylglucosamine (GlcNAc) residues in peptidoglycan, from either the reducing or the non-reducing ends of the peptidoglycan chains, with concomitant formation of a 1,6-anhydrobond in the MurNAc residue.. Murein-degrading enzyme. May play a role in recycling of muropeptides during cell elongation and/or cell division. The chain is Membrane-bound lytic murein transglycosylase C from Salmonella paratyphi A (strain ATCC 9150 / SARB42).